A 131-amino-acid chain; its full sequence is Small ribosomal subunit protein uS8 (131 aa).

The protein belongs to the universal ribosomal protein uS8 family. In terms of assembly, part of the 30S ribosomal subunit. Contacts proteins S5 and S12.

One of the primary rRNA binding proteins, it binds directly to 16S rRNA central domain where it helps coordinate assembly of the platform of the 30S subunit. In Phocaeicola vulgatus (strain ATCC 8482 / DSM 1447 / JCM 5826 / CCUG 4940 / NBRC 14291 / NCTC 11154) (Bacteroides vulgatus), this protein is Small ribosomal subunit protein uS8.